The chain runs to 298 residues: ATP synthase gamma chain (298 aa).

The protein belongs to the ATPase gamma chain family. As to quaternary structure, F-type ATPases have 2 components, CF(1) - the catalytic core - and CF(0) - the membrane proton channel. CF(1) has five subunits: alpha(3), beta(3), gamma(1), delta(1), epsilon(1). CF(0) has three main subunits: a, b and c.

It localises to the cell inner membrane. In terms of biological role, produces ATP from ADP in the presence of a proton gradient across the membrane. The gamma chain is believed to be important in regulating ATPase activity and the flow of protons through the CF(0) complex. This is ATP synthase gamma chain from Francisella philomiragia subsp. philomiragia (strain ATCC 25017 / CCUG 19701 / FSC 153 / O#319-036).